The chain runs to 599 residues: Dehydrogenase eriK (599 aa).

Residues 1 to 20 form the signal peptide; the sequence is MAFLKARLAALLSVAVSCSA. FAD is bound by residues 43–44 and 64–65; these read TA and EG. N-linked (GlcNAc...) asparagine glycosylation is present at N93. An FAD-binding site is contributed by 122–125; sequence NGMY. Residues N169, N191, N234, N260, N284, N319, N339, N353, N365, N370, N398, N456, and N518 are each glycosylated (N-linked (GlcNAc...) asparagine). Residues A569 and 580–581 contribute to the FAD site; that span reads TQ.

The protein belongs to the GMC oxidoreductase family. As to quaternary structure, homodimer. Requires FAD as cofactor.

Dehydrogenase; part of the gene cluster that mediates the biosynthesis of erinacines, cyathane-xylosides that show unique biological activities, including leishmanicidal activity, stimulating activity for nerve growth-factor synthesis, and agonistic activity toward the kappa opioid receptor. The role of the dehydrogenase eriK within the pathway has still to be determined. The first step of the erinacines biosynthesis pathway is catalyzed by the geranylgeranyl diphosphate (GGPP) synthase eriE via conversion of farnesyl pyrophosphate and isopentyl pyrophosphate into geranylgeranyl pyrophosphate (GGPP). GGPP is then substrate of the diterpene cyclase eriG for the production of cyatha-3,12-diene. The cytochrome P450 monooxygenase eriI then hydroxylates cyatha-3,12-diene at C-14 of the seven-membered ring to produce erinacol, which is further hydroxylated at C-15 by the cytochrome P450 monooxygenase eriC to yield cyathadiol. The cytochrome P450 monooxygenase eriA then catalyzes C-11 hydroxylation in the presence of the short chain dehydrogenase/reductase (SDR) eriH, which leads to the production of cyathatriol. The acetyltransferase eriL converts cyathatriol into 11-O-acetyl-cyathatriol. The SDR eriH catalyzes further oxidation of 11-O-acetyl-cyathatriol into 1-O-acetylcyathin A3. Finally, the glycosyl transferase eriJ tranfers xylose from UDP-xylose onto C-14 of 11-O-acetyl-cyathatriol to form eracine Q. EriJ is also able to convert 11-O-acetyl-cyathatriol to eracine Q2 by using UDP-D-glucose as cosubstrate, but at a lower rate. The chain is Dehydrogenase eriK from Hericium erinaceus (Lion's mane mushroom).